The following is a 157-amino-acid chain: 6,7-dimethyl-8-ribityllumazine synthase (157 aa).

Residues Phe-30, 64-66 (ALE), and 88-90 (CII) contribute to the 5-amino-6-(D-ribitylamino)uracil site. Residue 93–94 (ET) coordinates (2S)-2-hydroxy-3-oxobutyl phosphate. Residue His-96 is the Proton donor of the active site. Residue Asn-121 participates in 5-amino-6-(D-ribitylamino)uracil binding. Arg-135 is a (2S)-2-hydroxy-3-oxobutyl phosphate binding site.

This sequence belongs to the DMRL synthase family.

The catalysed reaction is (2S)-2-hydroxy-3-oxobutyl phosphate + 5-amino-6-(D-ribitylamino)uracil = 6,7-dimethyl-8-(1-D-ribityl)lumazine + phosphate + 2 H2O + H(+). It participates in cofactor biosynthesis; riboflavin biosynthesis; riboflavin from 2-hydroxy-3-oxobutyl phosphate and 5-amino-6-(D-ribitylamino)uracil: step 1/2. Its function is as follows. Catalyzes the formation of 6,7-dimethyl-8-ribityllumazine by condensation of 5-amino-6-(D-ribitylamino)uracil with 3,4-dihydroxy-2-butanone 4-phosphate. This is the penultimate step in the biosynthesis of riboflavin. This is 6,7-dimethyl-8-ribityllumazine synthase from Albidiferax ferrireducens (strain ATCC BAA-621 / DSM 15236 / T118) (Rhodoferax ferrireducens).